The sequence spans 138 residues: Large ribosomal subunit protein uL16 (138 aa).

Positions 1–15 (MLSPRKVKYRKKQRG) are enriched in basic residues. A disordered region spans residues 1–21 (MLSPRKVKYRKKQRGRLSGEA).

This sequence belongs to the universal ribosomal protein uL16 family. Part of the 50S ribosomal subunit.

Its function is as follows. Binds 23S rRNA and is also seen to make contacts with the A and possibly P site tRNAs. This chain is Large ribosomal subunit protein uL16, found in Borrelia recurrentis (strain A1).